Consider the following 878-residue polypeptide: Aconitate hydratase A (878 aa).

Residues Cys-426, Cys-492, and Cys-495 each coordinate [4Fe-4S] cluster.

It belongs to the aconitase/IPM isomerase family. As to quaternary structure, monomer. Requires [4Fe-4S] cluster as cofactor.

It carries out the reaction citrate = D-threo-isocitrate. The catalysed reaction is (2S,3R)-3-hydroxybutane-1,2,3-tricarboxylate = 2-methyl-cis-aconitate + H2O. It functions in the pathway carbohydrate metabolism; tricarboxylic acid cycle; isocitrate from oxaloacetate: step 2/2. It participates in organic acid metabolism; propanoate degradation. Its function is as follows. Involved in the catabolism of short chain fatty acids (SCFA) via the tricarboxylic acid (TCA)(acetyl degradation route) and probably the 2-methylcitrate cycle I (propionate degradation route). Catalyzes the reversible isomerization of citrate to isocitrate via cis-aconitate. Could catalyze the hydration of 2-methyl-cis-aconitate to yield (2R,3S)-2-methylisocitrate. The apo form of AcnA functions as a RNA-binding regulatory protein. This chain is Aconitate hydratase A (acnA), found in Rickettsia felis (strain ATCC VR-1525 / URRWXCal2) (Rickettsia azadi).